The chain runs to 481 residues: Argininosuccinate lyase (481 aa).

Belongs to the lyase 1 family. Argininosuccinate lyase subfamily.

It is found in the cytoplasm. The catalysed reaction is 2-(N(omega)-L-arginino)succinate = fumarate + L-arginine. It functions in the pathway amino-acid biosynthesis; L-arginine biosynthesis; L-arginine from L-ornithine and carbamoyl phosphate: step 3/3. In Methanococcus maripaludis (strain DSM 14266 / JCM 13030 / NBRC 101832 / S2 / LL), this protein is Argininosuccinate lyase.